A 194-amino-acid chain; its full sequence is Methyl-CpG-binding domain protein 3-like 1 (194 aa).

Residues 1–104 (MAKSSQRKQR…KLVPSYTGGS (104 aa)) are transcription repressor.

Belongs to the MBD3L family. In terms of tissue distribution, highly expressed in testis. Detected at low levels in pancreas. Not detected in the other tissues tested.

It localises to the nucleus. Its function is as follows. Transcriptional repressor. The polypeptide is Methyl-CpG-binding domain protein 3-like 1 (MBD3L1) (Homo sapiens (Human)).